The sequence spans 359 residues: Peptide chain release factor 1 (359 aa).

Position 236 is an N5-methylglutamine (Gln-236).

The protein belongs to the prokaryotic/mitochondrial release factor family. Post-translationally, methylated by PrmC. Methylation increases the termination efficiency of RF1.

It localises to the cytoplasm. In terms of biological role, peptide chain release factor 1 directs the termination of translation in response to the peptide chain termination codons UAG and UAA. The chain is Peptide chain release factor 1 from Streptococcus agalactiae serotype V (strain ATCC BAA-611 / 2603 V/R).